The following is a 179-amino-acid chain: Large ribosomal subunit protein uL5c (179 aa).

This sequence belongs to the universal ribosomal protein uL5 family. Part of the 50S ribosomal subunit; contacts the 5S rRNA.

Its subcellular location is the plastid. It localises to the organellar chromatophore. Its function is as follows. Binds 5S rRNA, forms part of the central protuberance of the 50S subunit. This chain is Large ribosomal subunit protein uL5c (rpl5), found in Paulinella chromatophora.